The sequence spans 355 residues: Glucose-6-phosphatase 2 (355 aa).

The Lumenal portion of the chain corresponds to 1–24; sequence MDFLHRSGVLIIHHLQEDYRTYYG. A helical membrane pass occupies residues 25–45; it reads FLNFMSNVGDPRNIFSIYFPL. Over 46–56 the chain is Cytoplasmic; the sequence is WFQLNQNVGTK. Residues 57-77 traverse the membrane as a helical segment; the sequence is MIWVAVIGDWFNLIFKWILFG. At 78-115 the chain is on the lumenal side; it reads HRPYWWIQETEIYPNHSSPCLEQFPTTCETGPGSPSGH. Residue R79 participates in substrate binding. A glycan (N-linked (GlcNAc...) asparagine) is linked at N92. H115 functions as the Proton donor in the catalytic mechanism. Residues 116–136 form a helical membrane-spanning segment; that stretch reads AMGSSCVWYVMVTAALSYTIS. Residues 137–146 lie on the Cytoplasmic side of the membrane; that stretch reads RMEESSVTLH. The chain crosses the membrane as a helical span at residues 147 to 167; that stretch reads RLTWSFLWSVFWLIQISVCIS. A topological domain (lumenal) is located at residue R168. R168 contacts substrate. Residues 169–189 traverse the membrane as a helical segment; sequence VFIATHFPHQVILGVIGGMLV. Catalysis depends on H174, which acts as the Nucleophile. Over 190 to 211 the chain is Cytoplasmic; the sequence is AEAFEHTPGVHMASLSVYLKTN. A helical transmembrane segment spans residues 212-232; that stretch reads VFLFLFALGFYLLLRLFGIDL. The Lumenal segment spans residues 233–252; it reads LWSVPIAKKWCANPDWIHID. Residues 253-273 form a helical membrane-spanning segment; it reads STPFAGLVRNLGVLFGLGFAI. The Cytoplasmic portion of the chain corresponds to 274-290; it reads NSEMFLRSCQGENGTKP. Residues 291–307 form a helical membrane-spanning segment; sequence SFRLLCALTSLTTMQLY. At 308-318 the chain is on the lumenal side; sequence RFIKIPTHAEP. A helical membrane pass occupies residues 319–339; sequence LFYLLSFCKSASIPLMVVALI. The Cytoplasmic segment spans residues 340–355; that stretch reads PYCVHMLMRPGDKKTK. The Prevents secretion from ER signature appears at 352-355; the sequence is KKTK.

It belongs to the glucose-6-phosphatase family. N-glycosylated; the non-glycosylated form is more unstable and is degraded through the proteasome. Specifically expressed in pancreatic islet cells, in particular those of beta-cell origin. Not detected in testis, kidney, muscle, liver, lung, spleen, brain, pituitary, gastric fundus or heart.

The protein resides in the endoplasmic reticulum membrane. The catalysed reaction is D-glucose 6-phosphate + H2O = D-glucose + phosphate. It functions in the pathway carbohydrate biosynthesis; gluconeogenesis. Functionally, may hydrolyze glucose-6-phosphate to glucose in the endoplasmic reticulum. May be responsible for glucose production through glycogenolysis and gluconeogenesis. In Mus musculus (Mouse), this protein is Glucose-6-phosphatase 2 (G6pc2).